The sequence spans 133 residues: MKAFSPVRSVRKSSLTEHSLGIARSKTPVDDPMSLLYNMNDCYSKLKELVPSIPQNKKVSKMEILQHVIDYILDLQLTLDSHPSIVSLHHLPRVGGNTSRTPLTPLNTDISILSLQAAEFSSEFTDESKSLCP.

A bHLH domain is found at 23 to 75 (ARSKTPVDDPMSLLYNMNDCYSKLKELVPSIPQNKKVSKMEILQHVIDYILDL). The Nuclear export signal motif lies at 106-115 (LNTDISILSL).

As to quaternary structure, heterodimer with other HLH proteins. In the embryo, expressed in a range of tissues, with primary expression in the developing pronephros; expressed in the pronephric anlage, and by the swimming tadpole stages expressed robustly in the pronephric tubules and weakly in the pronephric duct. Expressed in the secondary heart field. In the developing nervous system, expressed in the neural crest and in the neural folds during neurula stages, and at stage 20 in the neural tube, ventral mesoderm and mid-hindbrain boundary. By early tailbud stages, expressed in the neural tube, somites and branchial arches. In tadpoles (stage 37/38), expressed in the heart, eye, otic vesicle, somites and branchial arches. Also expressed in migrating muscle cells. Expressed at a low level in limbs, with expression decreasing as limbs develop, but expressed at a high level in blastemas (regenerated limbs), where expression is localized primarily to the blastemal epidermis. Widely expressed in adults with highest expression in the spleen, skin, intestine and brain, and at a much lower level in testis and heart.

It localises to the cytoplasm. The protein resides in the nucleus. Its function is as follows. Transcriptional regulator (lacking a basic DNA binding domain) which negatively regulates the basic helix-loop-helix (bHLH) transcription factors by forming heterodimers and inhibiting their DNA binding and transcriptional activity. Inhibits the activity of both neurogenic (neurod1/neuroD) and myogenic (myod1/myoD) bHLH factors. May play a role in the regulation of the circadian clock. This is DNA-binding protein inhibitor ID-2-A (id2-a) from Xenopus laevis (African clawed frog).